The following is a 135-amino-acid chain: Small ribosomal subunit protein uS11 (135 aa).

Residues 1–10 show a composition bias toward polar residues; sequence MPPKTRSQTG. The segment at 1 to 28 is disordered; it reads MPPKTRSQTGAKKVRRKEKKNVAHGHAH. The segment covering 12–28 has biased composition (basic residues); it reads KKVRRKEKKNVAHGHAH.

Belongs to the universal ribosomal protein uS11 family. Part of the 30S ribosomal subunit. Interacts with proteins S7 and S18. Binds to IF-3.

Located on the platform of the 30S subunit, it bridges several disparate RNA helices of the 16S rRNA. Forms part of the Shine-Dalgarno cleft in the 70S ribosome. This is Small ribosomal subunit protein uS11 from Acidothermus cellulolyticus (strain ATCC 43068 / DSM 8971 / 11B).